A 214-amino-acid polypeptide reads, in one-letter code: Neurogenin-3 (214 aa).

Residues 1-14 (MTPQPSGAPTVQVT) show a composition bias toward polar residues. Residues 1-98 (MTPQPSGAPT…NDRERNRMHN (98 aa)) form a disordered region. The span at 15-26 (RETERSFPRASE) shows a compositional bias: basic and acidic residues. Composition is skewed to basic residues over residues 57–70 (APRK…GRSR) and 79–88 (KQRRSRRKKA). One can recognise a bHLH domain in the interval 83 to 135 (SRRKKANDRERNRMHNLNSALDALRGVLPTFPDDAKLTKIETLRFAHNYIWAL).

In terms of assembly, efficient DNA binding requires dimerization with another bHLH protein. Interacts with ATOH8.

It is found in the nucleus. Acts as a transcriptional regulator. Together with NKX2-2, initiates transcriptional activation of NEUROD1. Involved in neurogenesis. Also required for the specification of a common precursor of the 4 pancreatic endocrine cell types. In Homo sapiens (Human), this protein is Neurogenin-3 (NEUROG3).